The chain runs to 424 residues: Histidine--tRNA ligase (424 aa).

It belongs to the class-II aminoacyl-tRNA synthetase family. Homodimer.

Its subcellular location is the cytoplasm. The enzyme catalyses tRNA(His) + L-histidine + ATP = L-histidyl-tRNA(His) + AMP + diphosphate + H(+). This chain is Histidine--tRNA ligase, found in Salmonella paratyphi A (strain ATCC 9150 / SARB42).